A 274-amino-acid polypeptide reads, in one-letter code: NAD kinase (274 aa).

The Proton acceptor role is filled by Asp-60. NAD(+)-binding positions include 60–61 (DG), Lys-65, 127–128 (NE), and Arg-152.

Belongs to the NAD kinase family. A divalent metal cation is required as a cofactor.

The protein localises to the cytoplasm. The catalysed reaction is NAD(+) + ATP = ADP + NADP(+) + H(+). In terms of biological role, involved in the regulation of the intracellular balance of NAD and NADP, and is a key enzyme in the biosynthesis of NADP. Catalyzes specifically the phosphorylation on 2'-hydroxyl of the adenosine moiety of NAD to yield NADP. The chain is NAD kinase from Mycoplasmoides gallisepticum (strain R(low / passage 15 / clone 2)) (Mycoplasma gallisepticum).